A 195-amino-acid chain; its full sequence is Ribosomal RNA small subunit methyltransferase G (195 aa).

S-adenosyl-L-methionine-binding positions include Gly60, Leu65, 114–115 (IE), and Arg128.

It belongs to the methyltransferase superfamily. RNA methyltransferase RsmG family.

The protein resides in the cytoplasm. It catalyses the reaction guanosine(527) in 16S rRNA + S-adenosyl-L-methionine = N(7)-methylguanosine(527) in 16S rRNA + S-adenosyl-L-homocysteine. Specifically methylates the N7 position of guanine in position 527 of 16S rRNA. The chain is Ribosomal RNA small subunit methyltransferase G from Dinoroseobacter shibae (strain DSM 16493 / NCIMB 14021 / DFL 12).